The sequence spans 382 residues: Beta-1,4-galactosyltransferase 6 (382 aa).

The Cytoplasmic portion of the chain corresponds to 1–15 (MSALKRMMRVSNRSL). A helical; Signal-anchor for type II membrane protein transmembrane segment spans residues 16–35 (IAFIFFFSLSTSCLYFIYVA). The Lumenal portion of the chain corresponds to 36-382 (PGIANTYLFM…MPELAPIEDY (347 aa)). Residues N71, N75, N83, N84, N99, and N122 are each glycosylated (N-linked (GlcNAc...) asparagine). A disulfide bridge links C108 with C152. UDP-alpha-D-galactose-binding positions include 163-167 (PFRNR), 202-204 (FNR), 229-230 (VD), Y258, and W290. C223 and C242 are oxidised to a cystine. D230 contributes to the Mn(2+) binding site. Position 292–295 (292–295 (GEDD)) interacts with N-acetyl-D-glucosamine. An N-linked (GlcNAc...) asparagine glycan is attached at N307. H323 provides a ligand contact to Mn(2+). 323-324 (HH) provides a ligand contact to UDP-alpha-D-galactose. N-acetyl-D-glucosamine is bound at residue R334. N-linked (GlcNAc...) asparagine glycosylation is present at N367.

The protein belongs to the glycosyltransferase 7 family. The cofactor is Mn(2+). It depends on Mg(2+) as a cofactor. Ca(2+) is required as a cofactor. In terms of tissue distribution, brain and kidney.

The protein localises to the golgi apparatus. It localises to the golgi stack membrane. It carries out the reaction a beta-D-glucosyl-(1&lt;-&gt;1')-N-acylsphing-4-enine + UDP-alpha-D-galactose = a beta-D-Gal-(1-&gt;4)-beta-D-Glc-(1&lt;-&gt;1)-Cer(d18:1(4E)) + UDP + H(+). It participates in protein modification; protein glycosylation. The protein operates within sphingolipid metabolism. Its activity is regulated as follows. Inhibited by EDTA. Catalyzes the synthesis of lactosylceramide (LacCer) via the transfer of galactose from UDP-galactose to glucosylceramide (GlcCer). LacCer is the starting point in the biosynthesis of all gangliosides (membrane-bound glycosphingolipids) which play pivotal roles in the CNS including neuronal maturation and axonal and myelin formation. This Mus musculus (Mouse) protein is Beta-1,4-galactosyltransferase 6.